Here is a 622-residue protein sequence, read N- to C-terminus: Chaperone protein HscA homolog (622 aa).

Belongs to the heat shock protein 70 family.

Chaperone involved in the maturation of iron-sulfur cluster-containing proteins. Has a low intrinsic ATPase activity which is markedly stimulated by HscB. The sequence is that of Chaperone protein HscA homolog from Acidovorax ebreus (strain TPSY) (Diaphorobacter sp. (strain TPSY)).